Here is a 92-residue protein sequence, read N- to C-terminus: Bombyxin A-3 (92 aa).

An N-terminal signal peptide occupies residues 1–19 (MKILLAIALMLSTVMWVST). Pyrrolidone carboxylic acid is present on Gln20. 3 disulfides stabilise this stretch: Cys29/Cys79, Cys41/Cys92, and Cys78/Cys83. Residues 50–70 (SDAQYVSYGSAWLMPYSEGRG) constitute a propeptide, c peptide like.

It belongs to the insulin family. In terms of assembly, heterodimer of a B chain and an A chain linked by two disulfide bonds.

Its subcellular location is the secreted. Brain peptide responsible for activation of prothoracic glands to produce ecdysone in insects. This is Bombyxin A-3 (BBXA3) from Bombyx mori (Silk moth).